The sequence spans 188 residues: GMP synthase [glutamine-hydrolyzing] subunit A (188 aa).

In terms of domain architecture, Glutamine amidotransferase type-1 spans 1-188 (MIVILDNGGQ…FCKVCGYKFE (188 aa)). Cys-76 acts as the Nucleophile in catalysis. Active-site residues include His-163 and Glu-165.

Heterodimer composed of a glutamine amidotransferase subunit (A) and a GMP-binding subunit (B).

It catalyses the reaction XMP + L-glutamine + ATP + H2O = GMP + L-glutamate + AMP + diphosphate + 2 H(+). It participates in purine metabolism; GMP biosynthesis; GMP from XMP (L-Gln route): step 1/1. Functionally, catalyzes the synthesis of GMP from XMP. The protein is GMP synthase [glutamine-hydrolyzing] subunit A of Methanocaldococcus jannaschii (strain ATCC 43067 / DSM 2661 / JAL-1 / JCM 10045 / NBRC 100440) (Methanococcus jannaschii).